The following is a 1592-amino-acid chain: Probable serine/threonine-protein kinase DDB_G0293958 (1592 aa).

The Protein kinase 1 domain maps to 1–302; the sequence is MTGFEIFKKK…CLNYLKEKLI (302 aa). ATP is bound by residues 2-10 and K43; that span reads TGFEIFKKK. D158 functions as the Proton acceptor in the catalytic mechanism. Disordered stretches follow at residues 348-402, 455-526, and 837-867; these read INNN…NNNN, FNDI…SNYN, and KNNN…NDKS. Residues 349–402 are compositionally biased toward low complexity; that stretch reads NNNNNNNNNNNNNNNNNNNNNNNNNNNNNNNNNNNNNNNNNNNNNNNNNNNNNN. The stretch at 461–518 forms a coiled coil; sequence STTGEEEEEEKKDNLKRQNENNQIEQEDKGEKHLKETLNNNNNNNNNNNNNNNNNNNN. The segment covering 486–496 has biased composition (basic and acidic residues); it reads QEDKGEKHLKE. Low complexity-rich tracts occupy residues 499 to 526 and 837 to 864; these read NNNN…SNYN and KNNN…NNSN. In terms of domain architecture, Protein kinase 2 spans 1342-1592; sequence LGTYNLIGDS…KELIECLNKL (251 aa). ATP-binding positions include 1348–1356 and K1376; that span reads IGDSVFRNI. D1474 acts as the Proton acceptor in catalysis.

This sequence belongs to the protein kinase superfamily. Ser/Thr protein kinase family.

The enzyme catalyses L-seryl-[protein] + ATP = O-phospho-L-seryl-[protein] + ADP + H(+). It carries out the reaction L-threonyl-[protein] + ATP = O-phospho-L-threonyl-[protein] + ADP + H(+). This Dictyostelium discoideum (Social amoeba) protein is Probable serine/threonine-protein kinase DDB_G0293958.